A 624-amino-acid chain; its full sequence is UvrABC system protein C (624 aa).

Positions 25–104 constitute a GIY-YIG domain; it reads AEPGVYFMRD…IKQHQPHFNV (80 aa). Residues 214 to 249 enclose the UVR domain; the sequence is SELIDTLTPQMEAAAENLNFEQAARIRDQINGLKTL.

The protein belongs to the UvrC family. Interacts with UvrB in an incision complex.

Its subcellular location is the cytoplasm. Its function is as follows. The UvrABC repair system catalyzes the recognition and processing of DNA lesions. UvrC both incises the 5' and 3' sides of the lesion. The N-terminal half is responsible for the 3' incision and the C-terminal half is responsible for the 5' incision. This Cyanothece sp. (strain PCC 7425 / ATCC 29141) protein is UvrABC system protein C.